The sequence spans 1462 residues: Gag-Pol polyprotein (1462 aa).

Glycine 2 carries N-myristoyl glycine; by host lipidation. An interaction with Gp41 region spans residues 7-31; sequence VLRGKKADELEKIRLRPGGKKKYRL. The short motif at 16–22 is the Nuclear export signal element; the sequence is LEKIRLR. Residues 26 to 32 carry the Nuclear localization signal motif; it reads KKKYRLK. Residues 191–228 are interaction with human PPIA/CYPA and NUP153; sequence NCVGDHQAAMQIIREIINEEAADWDVQHPIPGPLPAGQ. The tract at residues 279-364 is dimerization/Multimerization of capsid protein p24; sequence YNPTNILDIK…GGPGQKARLM (86 aa). CCHC-type zinc fingers lie at residues 388–405 and 409–426; these read IKCWNCGKEGHSARQCRA and QGCWKCGKSGHIMANCPD. A disordered region spans residues 441–507; that stretch reads APQLPRGPKF…RRDTTQRDDR (67 aa). Residues 454 to 468 are compositionally biased toward low complexity; sequence NTNSTPNGSSSGPTG. 2 stretches are compositionally biased toward basic and acidic residues: residues 471 to 490 and 497 to 507; these read HAAREKTERAETKTIQRSDR and ARRDTTQRDDR. The dimerization of protease stretch occupies residues 512–516; it reads PQFSL. The region spanning 531–600 is the Peptidase A2 domain; that stretch reads VEVLLDTGAD…TPINIFGRNI (70 aa). Aspartate 536 (for protease activity; shared with dimeric partner) is an active-site residue. 2 dimerization of protease regions span residues 560-566 and 599-611; these read GIGGFIN and NILTALGMSLNLP. A Reverse transcriptase domain is found at 654–844; it reads EGQLEEAPPT…PPYQWMGYEL (191 aa). The Mg(2+) site is built by aspartate 720, aspartate 795, and aspartate 796. An RT 'primer grip' region spans residues 837–845; that stretch reads YQWMGYELW. The short motif at 1007–1023 is the Tryptophan repeat motif element; the sequence is WEQWWDNYWQVTWIPDW. The 124-residue stretch at 1043–1166 folds into the RNase H type-1 domain; that stretch reads IPGAETFYTD…IDHLVSQGIR (124 aa). Mg(2+) is bound by residues aspartate 1052, glutamate 1087, aspartate 1107, and aspartate 1158. The Integrase-type zinc-finger motif lies at 1172–1213; that stretch reads ERIEPAQEEHGKYHSNVKELAHKFGLPNLVARQIVNTCAQCQ. Zn(2+)-binding residues include histidine 1181, histidine 1185, cysteine 1209, and cysteine 1212. Residues 1222–1373 enclose the Integrase catalytic domain; the sequence is QVNAELGTWQ…TPVERLVNMI (152 aa). Mg(2+) contacts are provided by aspartate 1233, aspartate 1285, and glutamate 1321. The integrase-type DNA-binding region spans 1392-1439; it reads FRVYFREGRNQLWQGPGELLWKGDGAVIVKVGTDIKVIPRRKAKIIRD. Residues 1443-1462 are disordered; sequence RQEMDSGSHLEGAREDGEMA.

As to quaternary structure, homotrimer; further assembles as hexamers of trimers. Interacts with gp41 (via C-terminus). Interacts with host CALM1; this interaction induces a conformational change in the Matrix protein, triggering exposure of the myristate group. Interacts with host AP3D1; this interaction allows the polyprotein trafficking to multivesicular bodies during virus assembly. Part of the pre-integration complex (PIC) which is composed of viral genome, matrix protein, Vpr and integrase. Homodimer; the homodimer further multimerizes as homohexamers or homopentamers. Interacts with human PPIA/CYPA. Interacts with human NUP153. Interacts with host PDZD8; this interaction stabilizes the capsid. Interacts with monkey TRIM5; this interaction destabilizes the capsid. In terms of assembly, homodimer, whose active site consists of two apposed aspartic acid residues. As to quaternary structure, heterodimer of p66 RT and p51 RT (RT p66/p51). Heterodimerization of RT is essential for DNA polymerase activity. The overall folding of the subdomains is similar in p66 RT and p51 RT but the spatial arrangements of the subdomains are dramatically different. Homotetramer; may further associate as a homohexadecamer. Part of the pre-integration complex (PIC) which is composed of viral genome, matrix protein, Vpr and integrase. Interacts with human SMARCB1/INI1 and human PSIP1/LEDGF isoform 1. Interacts with human KPNA3; this interaction might play a role in nuclear import of the pre-integration complex. Interacts with human NUP153; this interaction might play a role in nuclear import of the pre-integration complex. The cofactor is Mg(2+). Specific enzymatic cleavages by the viral protease yield mature proteins. The protease is released by autocatalytic cleavage. The polyprotein is cleaved during and after budding, this process is termed maturation. Proteolytic cleavage of p66 RT removes the RNase H domain to yield the p51 RT subunit. Nucleocapsid protein p7 might be further cleaved after virus entry.

The protein resides in the host cell membrane. Its subcellular location is the host endosome. The protein localises to the host multivesicular body. It localises to the virion membrane. It is found in the host nucleus. The protein resides in the host cytoplasm. Its subcellular location is the virion. The catalysed reaction is Endopeptidase for which the P1 residue is preferably hydrophobic.. It carries out the reaction Endohydrolysis of RNA in RNA/DNA hybrids. Three different cleavage modes: 1. sequence-specific internal cleavage of RNA. Human immunodeficiency virus type 1 and Moloney murine leukemia virus enzymes prefer to cleave the RNA strand one nucleotide away from the RNA-DNA junction. 2. RNA 5'-end directed cleavage 13-19 nucleotides from the RNA end. 3. DNA 3'-end directed cleavage 15-20 nucleotides away from the primer terminus.. It catalyses the reaction 3'-end directed exonucleolytic cleavage of viral RNA-DNA hybrid.. The enzyme catalyses DNA(n) + a 2'-deoxyribonucleoside 5'-triphosphate = DNA(n+1) + diphosphate. Protease: The viral protease is inhibited by many synthetic protease inhibitors (PIs), such as amprenavir, atazanavir, indinavir, loprinavir, nelfinavir, ritonavir and saquinavir. Use of protease inhibitors in tritherapy regimens permit more ambitious therapeutic strategies. Reverse transcriptase/ribonuclease H: RT can be inhibited either by nucleoside RT inhibitors (NRTIs) or by non nucleoside RT inhibitors (NNRTIs). NRTIs act as chain terminators, whereas NNRTIs inhibit DNA polymerization by binding a small hydrophobic pocket near the RT active site and inducing an allosteric change in this region. Classical NRTIs are abacavir, adefovir (PMEA), didanosine (ddI), lamivudine (3TC), stavudine (d4T), tenofovir (PMPA), zalcitabine (ddC), and zidovudine (AZT). Classical NNRTIs are atevirdine (BHAP U-87201E), delavirdine, efavirenz (DMP-266), emivirine (I-EBU), and nevirapine (BI-RG-587). The tritherapies used as a basic effective treatment of AIDS associate two NRTIs and one NNRTI. Functionally, mediates, with Gag polyprotein, the essential events in virion assembly, including binding the plasma membrane, making the protein-protein interactions necessary to create spherical particles, recruiting the viral Env proteins, and packaging the genomic RNA via direct interactions with the RNA packaging sequence (Psi). Gag-Pol polyprotein may regulate its own translation, by the binding genomic RNA in the 5'-UTR. At low concentration, the polyprotein would promote translation, whereas at high concentration, the polyprotein would encapsidate genomic RNA and then shut off translation. In terms of biological role, targets the polyprotein to the plasma membrane via a multipartite membrane-binding signal, that includes its myristoylated N-terminus. Matrix protein is part of the pre-integration complex. Implicated in the release from host cell mediated by Vpu. Binds to RNA. Forms the conical core that encapsulates the genomic RNA-nucleocapsid complex in the virion. Most core are conical, with only 7% tubular. The core is constituted by capsid protein hexamer subunits. The core is disassembled soon after virion entry. Host restriction factors such as TRIM5-alpha or TRIMCyp bind retroviral capsids and cause premature capsid disassembly, leading to blocks in reverse transcription. Capsid restriction by TRIM5 is one of the factors which restricts HIV-1 to the human species. Host PIN1 apparently facilitates the virion uncoating. On the other hand, interactions with PDZD8 or CYPA stabilize the capsid. Its function is as follows. Encapsulates and protects viral dimeric unspliced genomic RNA (gRNA). Binds these RNAs through its zinc fingers. Acts as a nucleic acid chaperone which is involved in rearangement of nucleic acid secondary structure during gRNA retrotranscription. Also facilitates template switch leading to recombination. As part of the polyprotein, participates in gRNA dimerization, packaging, tRNA incorporation and virion assembly. Functionally, aspartyl protease that mediates proteolytic cleavages of Gag and Gag-Pol polyproteins during or shortly after the release of the virion from the plasma membrane. Cleavages take place as an ordered, step-wise cascade to yield mature proteins. This process is called maturation. Displays maximal activity during the budding process just prior to particle release from the cell. Also cleaves Nef and Vif, probably concomitantly with viral structural proteins on maturation of virus particles. Hydrolyzes host EIF4GI and PABP1 in order to shut off the capped cellular mRNA translation. The resulting inhibition of cellular protein synthesis serves to ensure maximal viral gene expression and to evade host immune response. In terms of biological role, multifunctional enzyme that converts the viral RNA genome into dsDNA in the cytoplasm, shortly after virus entry into the cell. This enzyme displays a DNA polymerase activity that can copy either DNA or RNA templates, and a ribonuclease H (RNase H) activity that cleaves the RNA strand of RNA-DNA heteroduplexes in a partially processive 3' to 5' endonucleasic mode. Conversion of viral genomic RNA into dsDNA requires many steps. A tRNA(3)-Lys binds to the primer-binding site (PBS) situated at the 5'-end of the viral RNA. RT uses the 3' end of the tRNA primer to perform a short round of RNA-dependent minus-strand DNA synthesis. The reading proceeds through the U5 region and ends after the repeated (R) region which is present at both ends of viral RNA. The portion of the RNA-DNA heteroduplex is digested by the RNase H, resulting in a ssDNA product attached to the tRNA primer. This ssDNA/tRNA hybridizes with the identical R region situated at the 3' end of viral RNA. This template exchange, known as minus-strand DNA strong stop transfer, can be either intra- or intermolecular. RT uses the 3' end of this newly synthesized short ssDNA to perform the RNA-dependent minus-strand DNA synthesis of the whole template. RNase H digests the RNA template except for two polypurine tracts (PPTs) situated at the 5'-end and near the center of the genome. It is not clear if both polymerase and RNase H activities are simultaneous. RNase H probably can proceed both in a polymerase-dependent (RNA cut into small fragments by the same RT performing DNA synthesis) and a polymerase-independent mode (cleavage of remaining RNA fragments by free RTs). Secondly, RT performs DNA-directed plus-strand DNA synthesis using the PPTs that have not been removed by RNase H as primers. PPTs and tRNA primers are then removed by RNase H. The 3' and 5' ssDNA PBS regions hybridize to form a circular dsDNA intermediate. Strand displacement synthesis by RT to the PBS and PPT ends produces a blunt ended, linear dsDNA copy of the viral genome that includes long terminal repeats (LTRs) at both ends. Catalyzes viral DNA integration into the host chromosome, by performing a series of DNA cutting and joining reactions. This enzyme activity takes place after virion entry into a cell and reverse transcription of the RNA genome in dsDNA. The first step in the integration process is 3' processing. This step requires a complex comprising the viral genome, matrix protein, Vpr and integrase. This complex is called the pre-integration complex (PIC). The integrase protein removes 2 nucleotides from each 3' end of the viral DNA, leaving recessed CA OH's at the 3' ends. In the second step, the PIC enters cell nucleus. This process is mediated through integrase and Vpr proteins, and allows the virus to infect a non dividing cell. This ability to enter the nucleus is specific of lentiviruses, other retroviruses cannot and rely on cell division to access cell chromosomes. In the third step, termed strand transfer, the integrase protein joins the previously processed 3' ends to the 5' ends of strands of target cellular DNA at the site of integration. The 5'-ends are produced by integrase-catalyzed staggered cuts, 5 bp apart. A Y-shaped, gapped, recombination intermediate results, with the 5'-ends of the viral DNA strands and the 3' ends of target DNA strands remaining unjoined, flanking a gap of 5 bp. The last step is viral DNA integration into host chromosome. This involves host DNA repair synthesis in which the 5 bp gaps between the unjoined strands are filled in and then ligated. Since this process occurs at both cuts flanking the HIV genome, a 5 bp duplication of host DNA is produced at the ends of HIV-1 integration. Alternatively, Integrase may catalyze the excision of viral DNA just after strand transfer, this is termed disintegration. This chain is Gag-Pol polyprotein (gag-pol), found in Human immunodeficiency virus type 2 subtype A (isolate SBLISY) (HIV-2).